Reading from the N-terminus, the 352-residue chain is uncharacterized protein (352 aa).

The N-terminal stretch at 1 to 22 is a signal peptide; it reads MAIYLDKLKMPIIIGLIVLIIA.

It belongs to the bacterial solute-binding protein 1 family. WtpA subfamily.

This is an uncharacterized protein from Staphylothermus marinus (strain ATCC 43588 / DSM 3639 / JCM 9404 / F1).